A 203-amino-acid polypeptide reads, in one-letter code: Nucleoside triphosphate pyrophosphatase (203 aa).

D78 (proton acceptor) is an active-site residue.

Belongs to the Maf family. A divalent metal cation is required as a cofactor.

It localises to the cytoplasm. The catalysed reaction is a ribonucleoside 5'-triphosphate + H2O = a ribonucleoside 5'-phosphate + diphosphate + H(+). The enzyme catalyses a 2'-deoxyribonucleoside 5'-triphosphate + H2O = a 2'-deoxyribonucleoside 5'-phosphate + diphosphate + H(+). Its function is as follows. Nucleoside triphosphate pyrophosphatase. May have a dual role in cell division arrest and in preventing the incorporation of modified nucleotides into cellular nucleic acids. This chain is Nucleoside triphosphate pyrophosphatase, found in Prochlorococcus marinus (strain AS9601).